The primary structure comprises 142 residues: 3-hydroxyacyl-[acyl-carrier-protein] dehydratase FabZ (142 aa).

Residue His-48 is part of the active site.

It belongs to the thioester dehydratase family. FabZ subfamily.

It localises to the cytoplasm. It carries out the reaction a (3R)-hydroxyacyl-[ACP] = a (2E)-enoyl-[ACP] + H2O. Involved in unsaturated fatty acids biosynthesis. Catalyzes the dehydration of short chain beta-hydroxyacyl-ACPs and long chain saturated and unsaturated beta-hydroxyacyl-ACPs. This Ruminiclostridium cellulolyticum (strain ATCC 35319 / DSM 5812 / JCM 6584 / H10) (Clostridium cellulolyticum) protein is 3-hydroxyacyl-[acyl-carrier-protein] dehydratase FabZ.